A 378-amino-acid chain; its full sequence is Histidinol-phosphate aminotransferase 2 (378 aa).

At lysine 240 the chain carries N6-(pyridoxal phosphate)lysine.

This sequence belongs to the class-II pyridoxal-phosphate-dependent aminotransferase family. Histidinol-phosphate aminotransferase subfamily. As to quaternary structure, homodimer. Requires pyridoxal 5'-phosphate as cofactor.

The catalysed reaction is L-histidinol phosphate + 2-oxoglutarate = 3-(imidazol-4-yl)-2-oxopropyl phosphate + L-glutamate. It participates in amino-acid biosynthesis; L-histidine biosynthesis; L-histidine from 5-phospho-alpha-D-ribose 1-diphosphate: step 7/9. The protein is Histidinol-phosphate aminotransferase 2 (hisC2) of Caulobacter vibrioides (strain ATCC 19089 / CIP 103742 / CB 15) (Caulobacter crescentus).